Consider the following 1417-residue polypeptide: DNA-directed RNA polymerase subunit beta' (1417 aa).

4 residues coordinate Zn(2+): C68, C70, C83, and C86. Residues D458, D460, and D462 each contribute to the Mg(2+) site. Zn(2+)-binding residues include C811, C884, C891, and C894.

The protein belongs to the RNA polymerase beta' chain family. As to quaternary structure, the RNAP catalytic core consists of 2 alpha, 1 beta, 1 beta' and 1 omega subunit. When a sigma factor is associated with the core the holoenzyme is formed, which can initiate transcription. Mg(2+) is required as a cofactor. Requires Zn(2+) as cofactor.

It catalyses the reaction RNA(n) + a ribonucleoside 5'-triphosphate = RNA(n+1) + diphosphate. Functionally, DNA-dependent RNA polymerase catalyzes the transcription of DNA into RNA using the four ribonucleoside triphosphates as substrates. The chain is DNA-directed RNA polymerase subunit beta' from Francisella tularensis subsp. holarctica (strain OSU18).